The following is a 760-amino-acid chain: uncharacterized protein (760 aa).

An N-terminal signal peptide occupies residues 1–20; it reads MKFKLFLGSSFFGVATLLIA. Cys21 carries N-palmitoyl cysteine lipidation. The S-diacylglycerol cysteine moiety is linked to residue Cys21. 3 disordered regions span residues 221–243, 272–315, and 705–741; these read ENAANGTTEKAEKTVSASSLQLK, AKTN…TSDD, and IKATSKEGEQNQGKKGDGAQNQGKKGDGAQNGKNDKA. Residues 272–284 show a composition bias toward basic and acidic residues; sequence AKTNGEKGNEKQE. A compositionally biased stretch (polar residues) spans 300–312; the sequence is KNTSQDKTQNTQT. Residues 705-721 are compositionally biased toward basic and acidic residues; it reads IKATSKEGEQNQGKKGD.

It belongs to the MG185/MG260 family.

The protein resides in the cell membrane. This is an uncharacterized protein from Mycoplasma pneumoniae (strain ATCC 29342 / M129 / Subtype 1) (Mycoplasmoides pneumoniae).